A 605-amino-acid chain; its full sequence is MAIKQLSETLINQIAAGEVIERPASAAKELIENALDAGATRIEIATAGGGKTLLRVTDNGIGMSPADLELAIRRHCTSKLNDSLADIRTLGFRGEALPSIGSVARLSITTRTAEAREGAAITVTGGRSEPARPSAAIVGTVVEVRDLFFATPARLKFMKSEKAEAAAISEVVRRMAIAFPRVRFVLSGSDRTTLEFPATGDDRLARMAQVLGRDFRDNAIEIDAEREGARLTGFAGVPTFNRGNSLQQYAFVNGRPVQDKLIMSALRAAYAETIPQGRYPIAVLSITLDPALVDVNVHPAKSDVRFRDPGLIRGLIIGAIREALTREGDRAATTGAHGLMRAFRPEFHRAGQQRPQEPWSAAASPHRPLRFEEAARGFAEAPQAAFSDFAQPSARSAAAAVEATRATDGQAASFPLGAARAQLHENYIVAQTDDGLVIVDQHAAHERLVFETMRTALHARPVPAQALLIPEIVGLPEDDCDRLMAHAEEFTRLGLAIERFGPAAVAVRETPAMLGEMDAAGLVRQLADELAEWDTASGLAGRLEYLAATMACHGSVRSGRRLRTEEMNALLRQMEATPGSGQCNHGRPTYIELKLADIERLFGRS.

It belongs to the DNA mismatch repair MutL/HexB family.

In terms of biological role, this protein is involved in the repair of mismatches in DNA. It is required for dam-dependent methyl-directed DNA mismatch repair. May act as a 'molecular matchmaker', a protein that promotes the formation of a stable complex between two or more DNA-binding proteins in an ATP-dependent manner without itself being part of a final effector complex. The chain is DNA mismatch repair protein MutL from Rhizobium meliloti (strain 1021) (Ensifer meliloti).